Consider the following 1030-residue polypeptide: MADHKYRLFNAVDPSKVSHAPKDHPEKRNDQKTRKLPAAPMRANVGAPAPSCGANTEDTELDNSDYMEALQLSADGCSQDVANVGDVELLSAGISNLKVQPINEEHSAKPEISICISSTTEENVSGDDDAASCITISDSSEDEQEPLPPDSMAVSEREIVANPGQEDIPQPMLTTEKVQRIEAFLRDVSIERREMEWNGPLTPPPLSSSQRQSRLADADTESMSPTDEDWQPPTTRPIYNSTQLANNDTQVNTICSADATRLDSSKRLADDETEANTLGSEELEPTYSSKRLADNDTEPNTLCSDSSETHNSTIHNNEPVPDESIEIPETSSEGELTPQKASSGSSTSGGDEHGSIQVSSINISAKINIKISIPTMESSSAEDDDEHYSSPRATKSLPSSEEVQHQEHQQQDPQSHQKSMLSVDDASEDEQFLTHAEKLLNQLYGKSWQTPDVIRTLKRSSGSGGKQAPLRPRNIQATAVTTAKKKKPKPDESVLGDFSIFTKPLRTNQTPLNSTRLPPMRAVQTERRPRTQKPLTRPRTNHIDEDRWRKLIDSDSGTDASDDEDADATFSESGSDSDSDKDKENKQKRGDLTYLDLSKDEVEVISNPDQDSPSPKCHRRLDDILRSCRASVKAKLPATPVQQPNIRRQLFTPNAGFENDNQAKEIVNRALDLDMLDELESDYLPGTPVHRRVQEVKKKLGIGQQGQTTPHESPILKLLTPKTAPPKGTAPPKTSAPPKVSTPPKSTKQIPKPRKQKDLSPVASGGKCGFLKSLEGQVSRDRADNEAFFYRENFARNKDQLAQHLYKMYNAQVFNNELDVPITWSKLLRNTAGRCMNKRKLNQRSSVVELSVKVLTTADRLRCTLIHELCHAAAWVFNGEGGHGRVWKMWAQRANDKFPDLPQIKVCHNYSIEFKYTYKCLSCDKASHAHSRSRKVEDLRCRICRGPITLFLNKKDKQGNTVSTPAGEAKGFAKFVKDNFQRHKRDNMTAAQVMRILSVEYAKQKGQPAEETAASIASRVETLTLDESSN.

6 disordered regions span residues 1-59 (MADH…TEDT), 196-245 (EWNG…TQLA), 266-361 (KRLA…VSSI), 375-433 (TMES…EQFL), 457-594 (LKRS…DLTY), and 699-764 (KLGI…PVAS). The segment covering 20-33 (APKDHPEKRNDQKT) has biased composition (basic and acidic residues). Composition is skewed to polar residues over residues 298–316 (EPNT…TIHN) and 329–349 (ETSS…STSG). Positions 505–516 (LRTNQTPLNSTR) are enriched in polar residues. Composition is skewed to basic and acidic residues over residues 541-553 (NHID…KLID) and 578-594 (DSDK…DLTY). Positions 720–748 (TPKTAPPKGTAPPKTSAPPKVSTPPKSTK) are enriched in low complexity.

The protein belongs to the serine-aspartate repeat-containing protein (SDr) family.

It is found in the cytoplasm. Its subcellular location is the chromosome. In terms of biological role, may play a role in DNA-protein cross-links (DPCs) clearance, ensuring the genomic stability by protecting germ cells and early embryos from various sources of damage. Limits replication stress and DNA double-strand breaks. The protein is Germ cell nuclear acidic protein of Drosophila melanogaster (Fruit fly).